Consider the following 90-residue polypeptide: Putative Fis-like DNA-binding protein (90 aa).

The H-T-H motif DNA-binding region spans 66–85; it reads QSRAAALLGIHRATLRKKLK.

It belongs to the transcriptional regulatory Fis family.

This is Putative Fis-like DNA-binding protein from Xylella fastidiosa (strain Temecula1 / ATCC 700964).